We begin with the raw amino-acid sequence, 332 residues long: Endonuclease 8-like 2 (332 aa).

The Schiff-base intermediate with DNA role is filled by Pro-2. The Proton donor role is filled by Glu-3. The Proton donor; for beta-elimination activity role is filled by Lys-50. Position 50 is an N6-acetyllysine (Lys-50). The segment at 59–121 (DEEMGPPGSS…EDDSEYLERD (63 aa)) is disordered. Phosphoserine is present on Ser-68. Over residues 74-84 (PQKEVQKEGAA) the composition is skewed to basic and acidic residues. Residues 94–104 (GQKTLDGSSRS) are compositionally biased toward polar residues. Lys-154 carries the N6-acetyllysine modification. Asn-231 contacts DNA. The FPG-type zinc-finger motif lies at 284-320 (QVYQKEQCPAGHQVMKEAFGPEDGLQRLTWWCPQCQP). The active-site Proton donor; for delta-elimination activity is the Arg-310.

The protein belongs to the FPG family. In terms of assembly, binds EP300. As to expression, detected in testis, skeletal muscle, heart, brain, placenta, lung, pancreas, kidney and liver.

It is found in the nucleus. The catalysed reaction is 2'-deoxyribonucleotide-(2'-deoxyribose 5'-phosphate)-2'-deoxyribonucleotide-DNA = a 3'-end 2'-deoxyribonucleotide-(2,3-dehydro-2,3-deoxyribose 5'-phosphate)-DNA + a 5'-end 5'-phospho-2'-deoxyribonucleoside-DNA + H(+). With respect to regulation, acetylation of Lys-50 leads to loss of DNA nicking activity. Acetylation of Lys-154 has no effect. Involved in base excision repair of DNA damaged by oxidation or by mutagenic agents. Has DNA glycosylase activity towards 5-hydroxyuracil and other oxidized derivatives of cytosine with a preference for mismatched double-stranded DNA (DNA bubbles). Has low or no DNA glycosylase activity towards thymine glycol, 2-hydroxyadenine, hypoxanthine and 8-oxoguanine. Has AP (apurinic/apyrimidinic) lyase activity and introduces nicks in the DNA strand. Cleaves the DNA backbone by beta-delta elimination to generate a single-strand break at the site of the removed base with both 3'- and 5'-phosphates. This is Endonuclease 8-like 2 (NEIL2) from Homo sapiens (Human).